Consider the following 403-residue polypeptide: Shaggy-related protein kinase GSK4 (403 aa).

A Protein kinase domain is found at 71 to 355 (YMAERVVGTG…ALEACAHSFF (285 aa)). Residues 77-85 (VGTGSFGVV) and lysine 100 each bind ATP. Aspartate 196 serves as the catalytic Proton acceptor.

Belongs to the protein kinase superfamily. CMGC Ser/Thr protein kinase family. GSK-3 subfamily. Interacts with LIC.

The catalysed reaction is L-seryl-[protein] + ATP = O-phospho-L-seryl-[protein] + ADP + H(+). It carries out the reaction L-threonyl-[protein] + ATP = O-phospho-L-threonyl-[protein] + ADP + H(+). Its function is as follows. Probable serine-threonine kinase that may regulate brassinosteroid signaling. The protein is Shaggy-related protein kinase GSK4 of Oryza sativa subsp. japonica (Rice).